Here is a 307-residue protein sequence, read N- to C-terminus: Taste receptor type 2 member 106 (307 aa).

At 1-7 (MLTIPEG) the chain is on the extracellular side. The helical transmembrane segment at 8-28 (ILLCFITSGSVLGVLGNGFIL) threads the bilayer. Residues 29 to 41 (HVNCTDCVRQKFS) lie on the Cytoplasmic side of the membrane. The helical transmembrane segment at 42–62 (TTGFIFTGLAISRICVICIII) threads the bilayer. The Extracellular portion of the chain corresponds to 63–81 (SDGYLKLFSPHMVASDAHI). Residues 82–104 (IGISYLWIITNHTSTCFATILNL) form a helical membrane-spanning segment. Topologically, residues 105-124 (FYFLKIANFSHYIFFCLKRK) are cytoplasmic. The chain crosses the membrane as a helical span at residues 125-145 (LNTIFIFLLGCLFISWSVAFP). The Extracellular portion of the chain corresponds to 146–179 (QTVKIFNDKMKHRNTSWKFHLHKSKFIINHILLN). N-linked (GlcNAc...) asparagine glycosylation occurs at asparagine 159. A helical membrane pass occupies residues 180 to 200 (LGVIFFCMVAIITSFLLIISL). Residues 201-227 (WKHNRKMQLYVSRFKSLNTEVHLKVMK) are Cytoplasmic-facing. The chain crosses the membrane as a helical span at residues 228-248 (VLISFIILLILHVIGILIETL). Topologically, residues 249-257 (SFLRYENKL) are extracellular. Residues 258 to 278 (LLILGLNFSSMYPCCHSFILI) form a helical membrane-spanning segment. Over 279-307 (LANNQLKQASLKALKQFKCHKKDKDVRET) the chain is Cytoplasmic.

Belongs to the G-protein coupled receptor T2R family.

It localises to the membrane. In terms of biological role, putative taste receptor which may play a role in the perception of bitterness. The polypeptide is Taste receptor type 2 member 106 (Rattus norvegicus (Rat)).